The primary structure comprises 283 residues: Non-selective voltage-gated ion channel VDAC3 (283 aa).

Cys-2 carries the N-acetylcysteine modification. Position 4 is a phosphothreonine (Thr-4). Lys-12, Lys-15, and Lys-20 each carry N6-acetyllysine. A run of 2 beta stranded transmembrane segments spans residues 26–35 (MVKIDLRTKS) and 39–47 (VEFSTSGHA). Residue Lys-53 forms a Glycyl lysine isopeptide (Lys-Gly) (interchain with G-Cter in ubiquitin) linkage. The next 3 membrane-spanning stretches (beta stranded) occupy residues 54–64 (ASGNLETKYKI), 69–76 (LTFTQKWN), and 80–89 (TLGTEISWEN). Residue Lys-90 is modified to N6-acetyllysine. The chain crosses the membrane as a beta stranded span at residues 95 to 104 (LKLTLDTIFV). Residues Lys-109 and Lys-110 each participate in a glycyl lysine isopeptide (Lys-Gly) (interchain with G-Cter in ubiquitin) cross-link. The next 10 membrane-spanning stretches (beta stranded) occupy residues 111–120 (SGKLKASYKR), 123–130 (FSLGSNVD), 137–145 (TIYGWAVLA), 150–158 (LAGYQMSFD), 163–175 (KLSQNNFALGYKA), 178–185 (FQLHTHVN), 189–198 (EFGGSIYQKV), 202–211 (IETSINLAWT), 218–227 (RFGIAAKYKL), and 231–238 (TSLSAKVN). Residue Ser-241 is modified to Phosphoserine. Residues 242 to 244 (LIG) and 260 to 264 (SALID) each bind NAD(+). 2 consecutive transmembrane segments (beta stranded) span residues 242–251 (LIGLGYTQTL) and 254–263 (GVKLTLSALI). Residue Lys-266 is modified to N6-acetyllysine; alternate. A Glycyl lysine isopeptide (Lys-Gly) (interchain with G-Cter in ubiquitin); alternate cross-link involves residue Lys-266. A beta stranded membrane pass occupies residues 273-282 (HKVGLGFELE).

It belongs to the eukaryotic mitochondrial porin family. In terms of assembly, interacts with ARMC12 in a TBC1D21-dependent manner. Interacts with MISFA. Ubiquitinated by PRKN during mitophagy, leading to its degradation and enhancement of mitophagy. Deubiquitinated by USP30.

The protein localises to the mitochondrion outer membrane. It localises to the membrane. The enzyme catalyses chloride(in) = chloride(out). The catalysed reaction is K(+)(in) = K(+)(out). Its function is as follows. Non-selective voltage-gated ion channel that mediates the transport of anions and cations through the mitochondrion outer membrane and plasma membrane. Forms a high-conducting channel with a stable open state and a voltage-induced closure with a mild preference for anions over cations. Involved in male fertility and sperm mitochondrial sheath formation. The chain is Non-selective voltage-gated ion channel VDAC3 from Bos taurus (Bovine).